The sequence spans 1850 residues: Serine/threonine-protein kinase WNK (1850 aa).

Disordered regions lie at residues 1–108 (MPDS…NALE), 221–253 (QHSI…NNDK), and 272–309 (MVND…EKAA). Low complexity-rich tracts occupy residues 16-26 (SSVSSTTASTT) and 234-251 (PPNT…AANN). The segment covering 284–309 (DMDKMVSEEERARKEQEKREEEEKAA) has biased composition (basic and acidic residues). In terms of domain architecture, Protein kinase spans 334–596 (LKFDEELGRG…VKQLLVDDFF (263 aa)). ATP-binding positions include serine 344, 416–419 (TELM), and lysine 466. The active-site Proton acceptor is aspartate 483. Residues 693–749 (DHRLLEIKRAKEEEERIREEAEIKEELRLRAEAKEKEKERLEKERLEKKAAAAAAAN) adopt a coiled-coil conformation. The segment covering 727–742 (EKEKERLEKERLEKKA) has biased composition (basic and acidic residues). 7 disordered regions span residues 727 to 790 (EKEK…AQQP), 890 to 943 (TPAS…KRKS), 1040 to 1130 (EPPT…AAKP), 1188 to 1249 (SPVS…TPAI), 1588 to 1636 (GTHI…PSHS), 1721 to 1740 (ASLS…DNEG), and 1769 to 1850 (IIPS…IENV). Positions 751–760 (NPTPIPPTPA) are enriched in pro residues. The span at 776-790 (STQTSAEIQQSAQQP) shows a compositional bias: polar residues. The segment covering 890–934 (TPASIASPSPAPSATDVASTTAPVTPAPTPTTTTDGGAAAASTTT) has biased composition (low complexity). Residues 1062-1071 (PKIEIEKTPP) are compositionally biased toward basic and acidic residues. The segment covering 1077-1101 (QEPNNVQVTNVRKVSQESNAESVQS) has biased composition (polar residues). Residues 1188–1207 (SPVSHSLSSNSSPSATTHSN) show a composition bias toward low complexity. Over residues 1208–1217 (MSSIQSTTSV) the composition is skewed to polar residues. The segment covering 1771–1805 (PSSRQSVRSATSSSPSTPPSSSSAPPKSLSSPTKS) has biased composition (low complexity). Residues 1806–1820 (YVSHCSLSIGYGSTA) show a composition bias toward polar residues. Positions 1821-1832 (SSEQQQREPSPS) are enriched in low complexity.

It belongs to the protein kinase superfamily. Ser/Thr protein kinase family. WNK subfamily. As to quaternary structure, interacts with gck-3 (via C-terminus). Mg(2+) is required as a cofactor. In terms of tissue distribution, expressed in pharynx, nervous system, hypodermis, spermatheca, excretory cell and canal and body wall muscles.

Its subcellular location is the cytoplasm. It carries out the reaction L-seryl-[protein] + ATP = O-phospho-L-seryl-[protein] + ADP + H(+). It catalyses the reaction L-threonyl-[protein] + ATP = O-phospho-L-threonyl-[protein] + ADP + H(+). Activated in response to hyperosmotic stress: cell shrinkage promotes formation of a membraneless compartment that concentrates wnk-1 with its downstrem substrates. Serine/threonine-protein kinase component of the WNK3-SPAK/OSR1 kinase cascade, which plays an important role in the regulation of electrolyte homeostasis and regulatory volume increase in response to hyperosmotic stress. Wnk-1 mediates regulatory volume increase in response to hyperosmotic stress by acting as a molecular crowding sensor, which senses cell shrinkage and mediates formation of a membraneless compartment by undergoing liquid-liquid phase separation. The membraneless compartment concentrates wnk-1 with its substrates. Phosphorylates gck-3. Plays a role in osmotic stress responses during which it increases gpdh-1 translation, likely by phosphorylating gck-3. Essential for larval development and the tubular formation of the excretory canals. This is Serine/threonine-protein kinase WNK from Caenorhabditis elegans.